Reading from the N-terminus, the 299-residue chain is Somaliensene A/B synthase (299 aa).

A run of 7 helical transmembrane segments spans residues 32–49, 56–72, 110–132, 153–171, 177–194, 222–241, and 247–269; these read WTTLFPATCFVLAAAVHT, TAVAVASGVLYFWLFVY, IAVRVAFPLYGWFLGVLEWALLW, LYAGIGVVAQLAAAWEIVA, AWRWIVTLTITVTLLMSV, VFLCAGFALGPLAIHHFLMA, and WWIVATDVVLGGLSLLLAFRVVL.

Belongs to the UbiA prenyltransferase family. Mg(2+) serves as cofactor.

The protein resides in the cell membrane. It carries out the reaction (2E,6E,10E,14E)-geranylfarnesyl diphosphate = somaliensene A + diphosphate. It catalyses the reaction (2E,6E,10E,14E)-geranylfarnesyl diphosphate = (-)-somaliensene B + diphosphate. It functions in the pathway secondary metabolite biosynthesis; terpenoid biosynthesis. In terms of biological role, sesterterpene cyclase, which converts geranylfarnesyl diphosphate (GFPP) into the terpenes somaliensene A and somaliensene B. This chain is Somaliensene A/B synthase, found in Streptomyces somaliensis (strain ATCC 33201 / DSM 40738 / JCM 12659 / KCTC 9044 / NCTC 11332 / NRRL B-12077 / IP 733).